A 499-amino-acid chain; its full sequence is MSSPKKNFKKPQPKTENQKQALNEERIAELKKSRILGKNRPFKKMIYVDTKAQRKQKHENVAFLKTLQENKESDVPKKRRGRKPKHAPLKEKNNLKLFDILEGSLKSHTENDDTNKVISLLVEVWEKKNKKKDNNSLSNKDIVNVLSKFELPDDEIIFVLDELRDKGIELPHDVEEHIHEFRANQDLSIIDEDIEELTTKNISNRDKVDDNVRFFLGSLDSSKMLDFESEQRIAKVLNSTDEESRKYAINQLVTSNLRLVVSIAKKHLERGLDFNDLIQEGNLGLLKAISKFNWSLGNKFSTYATWWIKQAITRAIADQARTVRIPVHMVETINRLAKAERALNQELGREPTAEELAEKMGGQAEGFTVKKIAEIKRLSLDPVSLDKTVGHDEESQFGDFVRDTDAQMPDEFTESRSNYEKIDELLNNCLSEQEELIVRMRIGMPPYNETKTLDEVSQKIKIPREKIRQIETKAIRKLRQAVRNNHMSLSFMRGNEKKD.

2 stretches are compositionally biased toward basic residues: residues 1-12 and 77-87; these read MSSPKKNFKKPQ and KKRRGRKPKHA. Disordered regions lie at residues 1–25 and 68–89; these read MSSP…LNEE and QENK…HAPL. A sigma-70 factor domain-2 region spans residues 252 to 322; it reads LVTSNLRLVV…TRAIADQART (71 aa). The Interaction with polymerase core subunit RpoC signature appears at 276 to 279; it reads DLIQ. The tract at residues 331–412 is sigma-70 factor domain-3; sequence ETINRLAKAE…DTDAQMPDEF (82 aa). The segment at 425-480 is sigma-70 factor domain-4; it reads LLNNCLSEQEELIVRMRIGMPPYNETKTLDEVSQKIKIPREKIRQIETKAIRKLRQ. Residues 453 to 472 constitute a DNA-binding region (H-T-H motif); it reads LDEVSQKIKIPREKIRQIET.

Belongs to the sigma-70 factor family. RpoD/SigA subfamily. As to quaternary structure, interacts transiently with the RNA polymerase catalytic core.

It localises to the cytoplasm. In terms of biological role, sigma factors are initiation factors that promote the attachment of RNA polymerase to specific initiation sites and are then released. This sigma factor is the primary sigma factor during exponential growth. This is RNA polymerase sigma factor SigA from Mycoplasma pneumoniae (strain ATCC 29342 / M129 / Subtype 1) (Mycoplasmoides pneumoniae).